We begin with the raw amino-acid sequence, 270 residues long: Small ribosomal subunit protein eS1 (270 aa).

Residues 235 to 270 (GTSKGGAASTAAVAKGEEGVKVDRPEGYEPPVLETV) form a disordered region. Over residues 239–248 (GGAASTAAVA) the composition is skewed to low complexity. The span at 249 to 261 (KGEEGVKVDRPEG) shows a compositional bias: basic and acidic residues.

This sequence belongs to the eukaryotic ribosomal protein eS1 family. In terms of assembly, component of the small ribosomal subunit. Mature ribosomes consist of a small (40S) and a large (60S) subunit. The 40S subunit contains about 33 different proteins and 1 molecule of RNA (18S). The 60S subunit contains about 49 different proteins and 3 molecules of RNA (28S, 5.8S and 5S).

It is found in the cytoplasm. The chain is Small ribosomal subunit protein eS1 from Ixodes scapularis (Black-legged tick).